A 255-amino-acid chain; its full sequence is Pimeloyl-[acyl-carrier protein] methyl ester esterase (255 aa).

Residues 16–242 (LVLLHGWGLN…AAHAPFISHP (227 aa)) form the AB hydrolase-1 domain. Substrate is bound by residues Trp22, 82-83 (SL), and 143-147 (FLALQ). Ser82 functions as the Nucleophile in the catalytic mechanism. Residues Asp207 and His235 contribute to the active site. Substrate is bound at residue His235.

This sequence belongs to the AB hydrolase superfamily. Carboxylesterase BioH family. As to quaternary structure, monomer.

Its subcellular location is the cytoplasm. It catalyses the reaction 6-carboxyhexanoyl-[ACP] methyl ester + H2O = 6-carboxyhexanoyl-[ACP] + methanol + H(+). It participates in cofactor biosynthesis; biotin biosynthesis. The physiological role of BioH is to remove the methyl group introduced by BioC when the pimeloyl moiety is complete. It allows to synthesize pimeloyl-ACP via the fatty acid synthetic pathway through the hydrolysis of the ester bonds of pimeloyl-ACP esters. The protein is Pimeloyl-[acyl-carrier protein] methyl ester esterase of Pectobacterium carotovorum subsp. carotovorum (strain PC1).